A 554-amino-acid polypeptide reads, in one-letter code: 3-(3-hydroxy-phenyl)propionate/3-hydroxycinnamic acid hydroxylase (554 aa).

FAD contacts are provided by residues 17–46 and 285–295; these read QVAIAGAGPVGLMMANYLGQMGIDVLVVEK and FRIDRVLLAGD.

It belongs to the PheA/TfdB FAD monooxygenase family. FAD is required as a cofactor.

It carries out the reaction 3-(3-hydroxyphenyl)propanoate + NADH + O2 + H(+) = 3-(2,3-dihydroxyphenyl)propanoate + NAD(+) + H2O. The catalysed reaction is (2E)-3-(3-hydroxyphenyl)prop-2-enoate + NADH + O2 + H(+) = (2E)-3-(2,3-dihydroxyphenyl)prop-2-enoate + NAD(+) + H2O. The protein operates within aromatic compound metabolism; 3-phenylpropanoate degradation. Catalyzes the insertion of one atom of molecular oxygen into position 2 of the phenyl ring of 3-(3-hydroxyphenyl)propionate (3-HPP) and hydroxycinnamic acid (3HCI). The sequence is that of 3-(3-hydroxy-phenyl)propionate/3-hydroxycinnamic acid hydroxylase from Escherichia coli O8 (strain IAI1).